The chain runs to 150 residues: Endoribonuclease YbeY (150 aa).

Residues H112, H116, and H122 each coordinate Zn(2+).

It belongs to the endoribonuclease YbeY family. The cofactor is Zn(2+).

The protein resides in the cytoplasm. Single strand-specific metallo-endoribonuclease involved in late-stage 70S ribosome quality control and in maturation of the 3' terminus of the 16S rRNA. The chain is Endoribonuclease YbeY from Geobacter sulfurreducens (strain ATCC 51573 / DSM 12127 / PCA).